We begin with the raw amino-acid sequence, 189 residues long: Cancer/testis antigen family 45 member A1 (189 aa).

A compositionally biased stretch (basic and acidic residues) spans 1–23 (MTDKTEKVAVDPETVFKRPRECD). Disordered regions lie at residues 1-27 (MTDKTEKVAVDPETVFKRPRECDSPSY) and 83-118 (RMMQKPGSNAPVGGNVTSSFSGDDLECRETASSPKS).

This sequence belongs to the CT45 family. Testis specific. Expressed in cancer cell lines.

Its subcellular location is the nucleus. The protein is Cancer/testis antigen family 45 member A1 of Homo sapiens (Human).